We begin with the raw amino-acid sequence, 496 residues long: Aspartyl/glutamyl-tRNA(Asn/Gln) amidotransferase subunit B (496 aa).

The protein belongs to the GatB/GatE family. GatB subfamily. As to quaternary structure, heterotrimer of A, B and C subunits.

The catalysed reaction is L-glutamyl-tRNA(Gln) + L-glutamine + ATP + H2O = L-glutaminyl-tRNA(Gln) + L-glutamate + ADP + phosphate + H(+). It catalyses the reaction L-aspartyl-tRNA(Asn) + L-glutamine + ATP + H2O = L-asparaginyl-tRNA(Asn) + L-glutamate + ADP + phosphate + 2 H(+). In terms of biological role, allows the formation of correctly charged Asn-tRNA(Asn) or Gln-tRNA(Gln) through the transamidation of misacylated Asp-tRNA(Asn) or Glu-tRNA(Gln) in organisms which lack either or both of asparaginyl-tRNA or glutaminyl-tRNA synthetases. The reaction takes place in the presence of glutamine and ATP through an activated phospho-Asp-tRNA(Asn) or phospho-Glu-tRNA(Gln). The sequence is that of Aspartyl/glutamyl-tRNA(Asn/Gln) amidotransferase subunit B from Xanthobacter autotrophicus (strain ATCC BAA-1158 / Py2).